A 383-amino-acid polypeptide reads, in one-letter code: Chitinase-3-like protein 1 (383 aa).

The N-terminal stretch at Met-1–Ala-21 is a signal peptide. The region spanning Tyr-22–Thr-383 is the GH18 domain. Cys-26 and Cys-51 are joined by a disulfide. Asn-60 carries N-linked (GlcNAc...) asparagine glycosylation. Chitin is bound by residues Glu-70–Trp-71, Gly-97–Asn-100, Tyr-141, Met-204–Asp-207, and Arg-263. Cys-300 and Cys-364 form a disulfide bridge. Residues Gln-324–Val-338 form an important for AKT1 activation and IL8 production region. Trp-352 contacts chitin.

This sequence belongs to the glycosyl hydrolase 18 family. Monomer. Post-translationally, glycosylated. In terms of tissue distribution, present in activated macrophages, articular chondrocytes, synovial cells as well as in liver. Very low or undetectable expression in non-inflammatory colon. Undetectable in muscle tissues, lung, pancreas, mononuclear cells, or fibroblasts.

It localises to the secreted. Its subcellular location is the extracellular space. The protein resides in the cytoplasm. The protein localises to the perinuclear region. It is found in the endoplasmic reticulum. Its function is as follows. Carbohydrate-binding lectin with a preference for chitin. Has no chitinase activity. May play a role in tissue remodeling and in the capacity of cells to respond to and cope with changes in their environment. Plays a role in T-helper cell type 2 (Th2) inflammatory response and IL-13-induced inflammation, regulating allergen sensitization, inflammatory cell apoptosis, dendritic cell accumulation and M2 macrophage differentiation. Facilitates invasion of pathogenic enteric bacteria into colonic mucosa and lymphoid organs. Mediates activation of AKT1 signaling pathway and subsequent IL8 production in colonic epithelial cells. Regulates antibacterial responses in lung by contributing to macrophage bacterial killing, controlling bacterial dissemination and augmenting host tolerance. Also regulates hyperoxia-induced injury, inflammation and epithelial apoptosis in lung. This is Chitinase-3-like protein 1 (CHI3L1) from Homo sapiens (Human).